Reading from the N-terminus, the 365-residue chain is Aminomethyltransferase (365 aa).

This sequence belongs to the GcvT family. In terms of assembly, the glycine cleavage system is composed of four proteins: P, T, L and H.

The catalysed reaction is N(6)-[(R)-S(8)-aminomethyldihydrolipoyl]-L-lysyl-[protein] + (6S)-5,6,7,8-tetrahydrofolate = N(6)-[(R)-dihydrolipoyl]-L-lysyl-[protein] + (6R)-5,10-methylene-5,6,7,8-tetrahydrofolate + NH4(+). In terms of biological role, the glycine cleavage system catalyzes the degradation of glycine. The protein is Aminomethyltransferase of Serratia proteamaculans (strain 568).